The primary structure comprises 427 residues: Hydroxylamine reductase (427 aa).

[4Fe-4S] cluster is bound by residues cysteine 3, cysteine 6, cysteine 15, and cysteine 21. Hybrid [4Fe-2O-2S] cluster is bound by residues histidine 129, glutamate 153, cysteine 197, cysteine 283, cysteine 311, cysteine 336, glutamate 370, and lysine 372. The residue at position 283 (cysteine 283) is a Cysteine persulfide.

Belongs to the HCP family. [4Fe-4S] cluster serves as cofactor. It depends on hybrid [4Fe-2O-2S] cluster as a cofactor.

The protein resides in the cytoplasm. The catalysed reaction is A + NH4(+) + H2O = hydroxylamine + AH2 + H(+). In terms of biological role, catalyzes the reduction of hydroxylamine to form NH(3) and H(2)O. This Methanothermobacter thermautotrophicus (strain ATCC 29096 / DSM 1053 / JCM 10044 / NBRC 100330 / Delta H) (Methanobacterium thermoautotrophicum) protein is Hydroxylamine reductase.